Here is a 70-residue protein sequence, read N- to C-terminus: Large ribosomal subunit protein bL31 (70 aa).

Residues Cys16, Cys18, Cys36, and Cys39 each contribute to the Zn(2+) site.

It belongs to the bacterial ribosomal protein bL31 family. Type A subfamily. Part of the 50S ribosomal subunit. Zn(2+) serves as cofactor.

Its function is as follows. Binds the 23S rRNA. In Tolumonas auensis (strain DSM 9187 / NBRC 110442 / TA 4), this protein is Large ribosomal subunit protein bL31.